A 131-amino-acid chain; its full sequence is Small ribosomal subunit protein uS11 (131 aa).

The protein belongs to the universal ribosomal protein uS11 family. Part of the 30S ribosomal subunit. Interacts with proteins S7 and S18. Binds to IF-3.

Its function is as follows. Located on the platform of the 30S subunit, it bridges several disparate RNA helices of the 16S rRNA. Forms part of the Shine-Dalgarno cleft in the 70S ribosome. This is Small ribosomal subunit protein uS11 from Pelobacter propionicus (strain DSM 2379 / NBRC 103807 / OttBd1).